The following is a 509-amino-acid chain: Autophagy-related protein 16 (509 aa).

WD repeat units follow at residues alanine 223–serine 262, glycine 265–threonine 304, glycine 307–threonine 347, leucine 349–glutamate 388, glycine 391–threonine 430, arginine 437–lysine 478, and glutamine 480–threonine 509.

Belongs to the WD repeat ATG16 family.

May play a role in autophagy. The sequence is that of Autophagy-related protein 16 from Arabidopsis thaliana (Mouse-ear cress).